The primary structure comprises 179 residues: UPF0316 protein Ping_1367 (179 aa).

2 consecutive transmembrane segments (helical) span residues 28–48 (FLAS…SAQV) and 55–75 (WYLA…GISI).

It belongs to the UPF0316 family.

The protein localises to the cell membrane. This Psychromonas ingrahamii (strain DSM 17664 / CCUG 51855 / 37) protein is UPF0316 protein Ping_1367.